The chain runs to 46 residues: Esculentin-1SEa (46 aa).

A disulfide bridge links C40 with C46.

Expressed by the skin glands.

The protein resides in the secreted. Its function is as follows. Mast cell degranulating peptide. Causes histamine release from rat peritoneal mast cells in vitro. Has antibacterial activity against the Gram-negative bacterium E.coli K12 and Gram-positive bacterium M.luteus NCT C2665. This Lithobates sevosus (Dusky gopher frog) protein is Esculentin-1SEa.